The chain runs to 763 residues: ATP-dependent RNA helicase SUV3 homolog, mitochondrial (763 aa).

Residues 1–43 (MQNCRRCISLTGLLRMTLYLRPSFSIDLSLRRLHRAAFLFSRK) constitute a mitochondrion transit peptide. In terms of domain architecture, Helicase ATP-binding spans 181 to 321 (NARAITRKIV…ALDLLQKICE (141 aa)). 194–201 (GPTNSGKT) contributes to the ATP binding site. A Helicase C-terminal domain is found at 330–508 (RLYDRLTELT…PTADQIELYA (179 aa)). The interval 724-763 (AQQLGKSNSQSNENSEPVVNSDDEDNYSGIGRKTRKKRRK) is disordered. Over residues 727 to 741 (LGKSNSQSNENSEPV) the composition is skewed to polar residues.

It belongs to the helicase family. The cofactor is Mg(2+). Mn(2+) serves as cofactor.

The protein resides in the mitochondrion. It catalyses the reaction ATP + H2O = ADP + phosphate + H(+). Major helicase player in mitochondrial RNA metabolism and maintenance. Likely component of the mitochondrial degradosome (mtEXO) complex, that degrades 3' overhang double-stranded RNA with a 3'-to-5' directionality in an ATP-dependent manner. ATPase and ATP-dependent multisubstrate helicase, able to unwind double-stranded (ds) DNA and RNA, and RNA/DNA heteroduplexes in the 5'-to-3' direction. Regulates mRNA stability and is required for the correct processing and maturation of mitochondrial transcripts. This chain is ATP-dependent RNA helicase SUV3 homolog, mitochondrial, found in Drosophila melanogaster (Fruit fly).